We begin with the raw amino-acid sequence, 156 residues long: Small ribosomal subunit protein uS7 (156 aa).

It belongs to the universal ribosomal protein uS7 family. As to quaternary structure, part of the 30S ribosomal subunit. Contacts proteins S9 and S11.

In terms of biological role, one of the primary rRNA binding proteins, it binds directly to 16S rRNA where it nucleates assembly of the head domain of the 30S subunit. Is located at the subunit interface close to the decoding center, probably blocks exit of the E-site tRNA. In Dehalococcoides mccartyi (strain ATCC BAA-2100 / JCM 16839 / KCTC 5957 / BAV1), this protein is Small ribosomal subunit protein uS7.